A 493-amino-acid polypeptide reads, in one-letter code: Cholesteryl ester transfer protein (493 aa).

A signal peptide spans 1–17 (MLAATVLTLALLGNVHA). Asn59 and Asn105 each carry an N-linked (GlcNAc...) asparagine glycan. Residues Cys160 and Cys201 are joined by a disulfide bond. Residues Asn257, Asn358, and Asn413 are each glycosylated (N-linked (GlcNAc...) asparagine).

This sequence belongs to the BPI/LBP/Plunc superfamily. BPI/LBP family. In terms of tissue distribution, probably primarily expressed in liver and adipose tissues. Detected in adrenal gland, mesenteric fat, spleen and aorta.

The protein resides in the secreted. It carries out the reaction cholesteryl (9Z-octadecenoate)(in) = cholesteryl (9Z-octadecenoate)(out). It catalyses the reaction 1,2,3-tri-(9Z-octadecenoyl)-glycerol(in) = 1,2,3-tri-(9Z-octadecenoyl)-glycerol(out). The enzyme catalyses cholesteryl (9Z,12Z)-octadecadienoate(in) = cholesteryl (9Z,12Z)-octadecadienoate(out). In terms of biological role, involved in the transfer of neutral lipids, including cholesteryl ester and triglyceride, among lipoprotein particles. Allows the net movement of cholesteryl ester from high density lipoproteins/HDL to triglyceride-rich very low density lipoproteins/VLDL, and the equimolar transport of triglyceride from VLDL to HDL. Regulates the reverse cholesterol transport, by which excess cholesterol is removed from peripheral tissues and returned to the liver for elimination. The sequence is that of Cholesteryl ester transfer protein from Macaca fascicularis (Crab-eating macaque).